We begin with the raw amino-acid sequence, 166 residues long: NAD(P)H-quinone oxidoreductase subunit I, chloroplastic (166 aa).

2 consecutive 4Fe-4S ferredoxin-type domains span residues 55 to 84 (GRIH…VDWK) and 95 to 124 (LNYS…MTEE). [4Fe-4S] cluster contacts are provided by Cys64, Cys67, Cys70, Cys74, Cys104, Cys107, Cys110, and Cys114.

This sequence belongs to the complex I 23 kDa subunit family. In terms of assembly, NDH is composed of at least 16 different subunits, 5 of which are encoded in the nucleus. It depends on [4Fe-4S] cluster as a cofactor.

Its subcellular location is the plastid. The protein localises to the chloroplast thylakoid membrane. The catalysed reaction is a plastoquinone + NADH + (n+1) H(+)(in) = a plastoquinol + NAD(+) + n H(+)(out). It carries out the reaction a plastoquinone + NADPH + (n+1) H(+)(in) = a plastoquinol + NADP(+) + n H(+)(out). Functionally, NDH shuttles electrons from NAD(P)H:plastoquinone, via FMN and iron-sulfur (Fe-S) centers, to quinones in the photosynthetic chain and possibly in a chloroplast respiratory chain. The immediate electron acceptor for the enzyme in this species is believed to be plastoquinone. Couples the redox reaction to proton translocation, and thus conserves the redox energy in a proton gradient. The polypeptide is NAD(P)H-quinone oxidoreductase subunit I, chloroplastic (Oxypappus scaber).